The chain runs to 217 residues: Meiotic expression up-regulated protein 29 (217 aa).

The signal sequence occupies residues 1–21; the sequence is MFVVKTAVLLFFALFIGNTYA. Residues 22-133 are Extracellular-facing; that stretch reads YTYSLDRIQA…SGVLLHRPWK (112 aa). Asn84 carries N-linked (GlcNAc...) asparagine glycosylation. Residues 134–154 form a helical membrane-spanning segment; it reads LFSLKPFTAAFVLLLAASYLA. Over 155–217 the chain is Cytoplasmic; sequence TACFRMLGYL…VPVPVLDESV (63 aa).

The protein resides in the membrane. The chain is Meiotic expression up-regulated protein 29 (meu29) from Schizosaccharomyces pombe (strain 972 / ATCC 24843) (Fission yeast).